Consider the following 770-residue polypeptide: Endothelin-converting enzyme 1 (770 aa).

The Cytoplasmic segment spans residues 1–68 (MRGVWPPPVS…WAARTQVEKR (68 aa)). Thr25 is subject to Phosphothreonine. A helical; Signal-anchor for type II membrane protein transmembrane segment spans residues 69-89 (LVVLVVLLAAGLVACLAALGI). Residues 90-770 (QYQTRSPSVC…MNPPHKCEVW (681 aa)) lie on the Extracellular side of the membrane. The 673-residue stretch at 98 to 770 (VCLSEACVSV…MNPPHKCEVW (673 aa)) folds into the Peptidase M13 domain. Intrachain disulfides connect Cys99–Cys104, Cys122–Cys755, Cys130–Cys715, Cys185–Cys435, and Cys644–Cys767. N-linked (GlcNAc...) asparagine glycosylation is found at Asn166, Asn187, Asn210, Asn270, Asn316, Asn362, Asn383, and Asn539. His607 serves as a coordination point for Zn(2+). Glu608 is an active-site residue. His611 serves as a coordination point for Zn(2+). Residues Asn632 and Asn651 are each glycosylated (N-linked (GlcNAc...) asparagine). Residue Glu667 coordinates Zn(2+). The active-site Proton donor is Asp671.

It belongs to the peptidase M13 family. As to quaternary structure, homodimer; disulfide-linked. Interacts with PPP1R16B. Interacts with TSPAN8; this interaction recruits the endothelin converting enzyme ECE1 to tetraspanin-enriched microdomains and positively modulates its enzymatic activity. Zn(2+) is required as a cofactor. In terms of tissue distribution, all isoforms are expressed in umbilical vein endothelial cells, polynuclear neutrophils, fibroblasts, atrium cardiomyocytes and ventricles. Isoforms A, B and C are also expressed in placenta, lung, heart, adrenal gland and phaeochromocytoma; isoforms A and C in liver, testis and small intestine; isoform B, C and D in endothelial cells and umbilical vein smooth muscle cells; isoforms C and D in saphenous vein cells, and isoform C in kidney.

The protein resides in the cell membrane. It carries out the reaction Hydrolysis of the 21-Trp-|-Val-22 bond in big endothelin to form endothelin 1.. With respect to regulation, inhibited by phosphoramidon. Activated by K49-P1-20, a twenty-residue synthetic peptide shortened from the snake B.asper myotoxin II. In terms of biological role, converts big endothelin-1 to endothelin-1. This chain is Endothelin-converting enzyme 1 (ECE1), found in Homo sapiens (Human).